The primary structure comprises 805 residues: Arginine/serine-rich protein PNISR (805 aa).

The segment covering 74 to 88 (PNNHGNFQGDSNFNR) has biased composition (polar residues). Disordered stretches follow at residues 74–331 (PNNH…EEKE) and 382–805 (LTGL…SRSR). 2 stretches are compositionally biased toward pro residues: residues 100-115 (PPHP…PTPG) and 183-195 (YWQP…PAPP). Residues 197–210 (NRRERPSSFRDRQR) show a composition bias toward basic and acidic residues. 2 positions are modified to phosphoserine: Ser-204 and Ser-211. A Glycyl lysine isopeptide (Lys-Gly) (interchain with G-Cter in SUMO2) cross-link involves residue Lys-218. The stretch at 237–276 (REGLEKMEREKQKKLEKERMEQQRSQLSKKEKKATEDAEG) forms a coiled coil. Residues 238-258 (EGLEKMEREKQKKLEKERMEQ) show a composition bias toward basic and acidic residues. 4 positions are modified to phosphoserine: Ser-290, Ser-304, Ser-313, and Ser-321. The span at 290-299 (SDEEEEDTEN) shows a compositional bias: acidic residues. A compositionally biased stretch (gly residues) spans 384-393 (GLGGLGGYGS). Positions 421-463 (QKQEAFWRKEKEQQLLHDKQMEEEKQQTERVTKEMNEFIHKEQ) are enriched in basic and acidic residues. Residues 429–461 (KEKEQQLLHDKQMEEEKQQTERVTKEMNEFIHK) adopt a coiled-coil conformation. 2 positions are modified to phosphoserine: Ser-465 and Ser-467. 2 stretches are compositionally biased toward basic and acidic residues: residues 470–486 (EARE…KRTP) and 494–506 (EPKK…EKQG). Thr-485 bears the Phosphothreonine mark. Residue Lys-496 forms a Glycyl lysine isopeptide (Lys-Gly) (interchain with G-Cter in SUMO2) linkage. A compositionally biased stretch (low complexity) spans 508–550 (SRSGSSSSGSSSSNSRTSSTSSTVSSSSYSSSSGSSRTSSRSS). 3 stretches are compositionally biased toward basic residues: residues 551-579 (SPKR…YSRR), 587-598 (ARVKIRDRRRSN), and 607-639 (RRNR…SRDR). The segment covering 659–721 (EAKEQERKKE…KRKRESERTF (63 aa)) has biased composition (basic and acidic residues). The stretch at 673-703 (IDKDRKKKDKEREREQDKRKEKQKREEKDFK) forms a coiled coil. A Glycyl lysine isopeptide (Lys-Gly) (interchain with G-Cter in SUMO2) cross-link involves residue Lys-703. Phosphoserine is present on Ser-726. Residues 732–753 (IRHDSRQDSKKSTTKDSKKHSG) are compositionally biased toward basic and acidic residues. Low complexity predominate over residues 754 to 767 (SDSSGRSSSESPGS). Composition is skewed to basic residues over residues 771–781 (KKAKKPKHSRS) and 789–805 (RSGK…SRSR).

Belongs to the splicing factor SR family. As to quaternary structure, interacts with PNN. As to expression, expressed in heart, skeletal muscle, thymus, spleen, kidney, liver, placenta and leukocytes.

It localises to the nucleus speckle. This is Arginine/serine-rich protein PNISR (PNISR) from Homo sapiens (Human).